The chain runs to 588 residues: Sulfite reductase [NADPH] hemoprotein beta-component (588 aa).

Positions 442, 448, 487, and 491 each coordinate [4Fe-4S] cluster. Siroheme is bound at residue Cys491.

The protein belongs to the nitrite and sulfite reductase 4Fe-4S domain family. As to quaternary structure, alpha(8)-beta(8). The alpha component is a flavoprotein, the beta component is a hemoprotein. It depends on siroheme as a cofactor. [4Fe-4S] cluster is required as a cofactor.

The catalysed reaction is hydrogen sulfide + 3 NADP(+) + 3 H2O = sulfite + 3 NADPH + 4 H(+). Its pathway is sulfur metabolism; hydrogen sulfide biosynthesis; hydrogen sulfide from sulfite (NADPH route): step 1/1. In terms of biological role, component of the sulfite reductase complex that catalyzes the 6-electron reduction of sulfite to sulfide. This is one of several activities required for the biosynthesis of L-cysteine from sulfate. This is Sulfite reductase [NADPH] hemoprotein beta-component from Actinobacillus pleuropneumoniae serotype 5b (strain L20).